The primary structure comprises 71 residues: Large ribosomal subunit protein bL31 (71 aa).

Zn(2+) is bound by residues Cys-16, Cys-18, Cys-37, and Cys-40.

It belongs to the bacterial ribosomal protein bL31 family. Type A subfamily. As to quaternary structure, part of the 50S ribosomal subunit. Zn(2+) is required as a cofactor.

Its function is as follows. Binds the 23S rRNA. This is Large ribosomal subunit protein bL31 from Mannheimia succiniciproducens (strain KCTC 0769BP / MBEL55E).